The following is a 305-amino-acid chain: MSNGRTLAATRNTGPETTSVVKDFLALIKIGIVNSNLVTTFTGMWLAFQFTSRHFLQELDVILFTMLGAALIIGGSGAMNNFIDQDIDPIMKRTKARPTVTGRFKPNFVLTIALSFLIVGEILLFAASFAAGMWGLAGIFAYVVLYSMWSKRKHVSNTVVGSISGAIPPIIGFAAVEPALGPGALALFLIMFAWQPPHFYALAMKRTEEYRAAKIPMLPVVKGFKRTKYSMLFWILLLLPLPFLLPELGIGFLTLATALNLGWLILALKGFTAKDDMKWANRMFIYSLNHMTILFVSIIIFAVFS.

9 consecutive transmembrane segments (helical) span residues Ile-30 to Phe-50, Leu-59 to Met-79, Phe-108 to Ser-128, Phe-129 to Trp-149, His-154 to Val-176, Leu-180 to Leu-202, Leu-232 to Phe-252, Leu-253 to Ala-273, and Phe-284 to Phe-304.

This sequence belongs to the UbiA prenyltransferase family. Protoheme IX farnesyltransferase subfamily. Interacts with CtaA.

The protein resides in the cell membrane. The enzyme catalyses heme b + (2E,6E)-farnesyl diphosphate + H2O = Fe(II)-heme o + diphosphate. It participates in porphyrin-containing compound metabolism; heme O biosynthesis; heme O from protoheme: step 1/1. Its function is as follows. Converts heme B (protoheme IX) to heme O by substitution of the vinyl group on carbon 2 of heme B porphyrin ring with a hydroxyethyl farnesyl side group. This Lysinibacillus sphaericus (strain C3-41) protein is Protoheme IX farnesyltransferase 1.